The sequence spans 566 residues: Protein kintoun (566 aa).

Disordered regions lie at residues lysine 183–glutamine 298, glutamate 399–glycine 467, and glutamine 493–isoleucine 552. A compositionally biased stretch (low complexity) spans proline 208–threonine 290. Basic and acidic residues predominate over residues glutamate 399–cysteine 424. A compositionally biased stretch (low complexity) spans threonine 440 to glycine 467. Residues aspartate 535–serine 550 show a composition bias toward basic and acidic residues.

It belongs to the PIH1 family. Kintoun subfamily.

The protein resides in the cytoplasm. The protein localises to the dynein axonemal particle. Required for cytoplasmic pre-assembly of axonemal dyneins, thereby playing a central role in motility in cilia and flagella. Involved in pre-assembly of dynein arm complexes in the cytoplasm before intraflagellar transport loads them for the ciliary compartment. The chain is Protein kintoun from Danio rerio (Zebrafish).